We begin with the raw amino-acid sequence, 623 residues long: ATP-dependent lipid A-core flippase (623 aa).

A run of 5 helical transmembrane segments spans residues 66–86, 103–123, 190–210, 290–310, and 317–337; these read LVLA…LAVI, VWFL…CNFF, LVVI…TLII, LTPL…AVAL, and ALTV…FDPI. Residues 67–349 form the ABC transmembrane type-1 domain; that stretch reads VLAVLLMAGA…LTNLAGKMQK (283 aa). In terms of domain architecture, ABC transporter spans 382–618; that stretch reads VEFRAVSHRF…NGLYASLYNM (237 aa). 416–423 contributes to the ATP binding site; that stretch reads GRSGSGKT.

Belongs to the ABC transporter superfamily. Lipid exporter (TC 3.A.1.106) family. Homodimer.

It is found in the cell inner membrane. The catalysed reaction is ATP + H2O + lipid A-core oligosaccharideSide 1 = ADP + phosphate + lipid A-core oligosaccharideSide 2.. Involved in lipopolysaccharide (LPS) biosynthesis. Translocates lipid A-core from the inner to the outer leaflet of the inner membrane. Transmembrane domains (TMD) form a pore in the inner membrane and the ATP-binding domain (NBD) is responsible for energy generation. This Bordetella bronchiseptica (strain ATCC BAA-588 / NCTC 13252 / RB50) (Alcaligenes bronchisepticus) protein is ATP-dependent lipid A-core flippase.